Consider the following 503-residue polypeptide: Cytochrome P450 3A7 (503 aa).

Cys442 is a heme binding site.

This sequence belongs to the cytochrome P450 family. The cofactor is heme. Expressed in fetal liver (at protein level).

The protein resides in the endoplasmic reticulum membrane. The protein localises to the microsome membrane. The enzyme catalyses an organic molecule + reduced [NADPH--hemoprotein reductase] + O2 = an alcohol + oxidized [NADPH--hemoprotein reductase] + H2O + H(+). It catalyses the reaction 3beta-hydroxyandrost-5-en-17-one + reduced [NADPH--hemoprotein reductase] + O2 = 3beta,16alpha-dihydroxy-androst-5-en-17-one + oxidized [NADPH--hemoprotein reductase] + H2O + H(+). The catalysed reaction is dehydroepiandrosterone 3-sulfate + reduced [NADPH--hemoprotein reductase] + O2 = 16alpha-hydroxydehydroepiandrosterone 3-sulfate + oxidized [NADPH--hemoprotein reductase] + H2O + H(+). It carries out the reaction testosterone + reduced [NADPH--hemoprotein reductase] + O2 = 6beta,17beta-dihydroxyandrost-4-en-3-one + oxidized [NADPH--hemoprotein reductase] + H2O + H(+). The enzyme catalyses estrone + reduced [NADPH--hemoprotein reductase] + O2 = 2-hydroxyestrone + oxidized [NADPH--hemoprotein reductase] + H2O + H(+). It catalyses the reaction estrone + reduced [NADPH--hemoprotein reductase] + O2 = 4-hydroxyestrone + oxidized [NADPH--hemoprotein reductase] + H2O + H(+). The catalysed reaction is estrone + reduced [NADPH--hemoprotein reductase] + O2 = 16alpha-hydroxyestrone + oxidized [NADPH--hemoprotein reductase] + H2O + H(+). It carries out the reaction 17beta-estradiol + reduced [NADPH--hemoprotein reductase] + O2 = 2-hydroxy-17beta-estradiol + oxidized [NADPH--hemoprotein reductase] + H2O + H(+). The enzyme catalyses 17beta-estradiol + reduced [NADPH--hemoprotein reductase] + O2 = 6beta-hydroxyestradiol-17beta + oxidized [NADPH--hemoprotein reductase] + H2O + H(+). It catalyses the reaction all-trans-retinoate + reduced [NADPH--hemoprotein reductase] + O2 = all-trans-4-hydroxyretinoate + oxidized [NADPH--hemoprotein reductase] + H2O + H(+). The catalysed reaction is all-trans-retinoate + reduced [NADPH--hemoprotein reductase] + O2 = all-trans-18-hydroxyretinoate + oxidized [NADPH--hemoprotein reductase] + H2O + H(+). It participates in steroid hormone biosynthesis. It functions in the pathway cofactor metabolism; retinol metabolism. Functionally, a cytochrome P450 monooxygenase involved in the metabolism of steroid hormones and vitamins during embryogenesis. Mechanistically, uses molecular oxygen inserting one oxygen atom into a substrate, and reducing the second into a water molecule, with two electrons provided by NADPH via cytochrome P450 reductase (NADPH--hemoprotein reductase). Catalyzes the hydroxylation of carbon-hydrogen bonds. Metabolizes 3beta-hydroxyandrost-5-en-17-one (dehydroepiandrosterone, DHEA), a precursor in the biosynthesis of androgen and estrogen steroid hormones. Exhibits high catalytic activity for the formation of hydroxyestrogens from estrone (E1), particularly D-ring hydroxylated estrone at the C16-alpha position. Mainly hydroxylates all trans-retinoic acid (atRA) to 4-hydroxyretinoate and may play a role in atRA clearance during fetal development. Also involved in the oxidative metabolism of xenobiotics including anticonvulsants. This Homo sapiens (Human) protein is Cytochrome P450 3A7.